Here is a 37-residue protein sequence, read N- to C-terminus: Large ribosomal subunit protein bL36c (37 aa).

Belongs to the bacterial ribosomal protein bL36 family.

Its subcellular location is the plastid. It localises to the chloroplast. The chain is Large ribosomal subunit protein bL36c (rpl36) from Nephroselmis olivacea (Green alga).